Reading from the N-terminus, the 307-residue chain is Transposase InsD for insertion element IS2-9 (307 aa).

The Integrase catalytic domain maps to 112–295 (KPAVPPSKRA…SPREYLRQRA (184 aa)).

In terms of biological role, involved in the transposition of the insertion sequence IS2. The chain is Transposase InsD for insertion element IS2-9 from Escherichia coli (strain K12).